The chain runs to 316 residues: tRNA dimethylallyltransferase (316 aa).

17–24 (GPTASGKT) lines the ATP pocket. 19–24 (TASGKT) provides a ligand contact to substrate. Interaction with substrate tRNA stretches follow at residues 42-45 (DSAL), 166-170 (QRLSR), and 247-252 (RCVGYR).

It belongs to the IPP transferase family. As to quaternary structure, monomer. The cofactor is Mg(2+).

It catalyses the reaction adenosine(37) in tRNA + dimethylallyl diphosphate = N(6)-dimethylallyladenosine(37) in tRNA + diphosphate. In terms of biological role, catalyzes the transfer of a dimethylallyl group onto the adenine at position 37 in tRNAs that read codons beginning with uridine, leading to the formation of N6-(dimethylallyl)adenosine (i(6)A). This chain is tRNA dimethylallyltransferase, found in Salmonella paratyphi A (strain ATCC 9150 / SARB42).